Here is an 875-residue protein sequence, read N- to C-terminus: Acetyl-coenzyme A carboxylase carboxyl transferase subunit alpha, chloroplastic (875 aa).

The transit peptide at 1 to 50 (MASSSATLVGSTASDLLRSSTTGFTGVPLRTLGRAGLVLKRRDLTVSVTA) directs the protein to the chloroplast. Residues 128–380 (EAKYQKALVE…KIAINEAMDE (253 aa)) enclose the CoA carboxyltransferase C-terminal domain. The stretch at 664 to 705 (LLLDKNKAATRKQELKKKSDEHKEAARLEQELKKKFDEVMDT) forms a coiled coil. Residues 845–875 (KEKYENLTRPAGDTLTDDKLREKVGVNRNFS) are disordered. A compositionally biased stretch (basic and acidic residues) spans 860–869 (TDDKLREKVG).

Belongs to the AccA family. As to quaternary structure, acetyl-CoA carboxylase is a heterohexamer composed of biotin carboxyl carrier protein, biotin carboxylase and two subunits each of ACCase subunit alpha and ACCase plastid-coded subunit beta (accD).

Its subcellular location is the plastid. The protein resides in the chloroplast inner membrane. The catalysed reaction is N(6)-carboxybiotinyl-L-lysyl-[protein] + acetyl-CoA = N(6)-biotinyl-L-lysyl-[protein] + malonyl-CoA. The protein operates within lipid metabolism; malonyl-CoA biosynthesis; malonyl-CoA from acetyl-CoA: step 1/1. Its activity is regulated as follows. Activated by reductants such as dithiothreitol (DTT), and by thioredoxin in vivo, following exposure to light. Functionally, component of the acetyl coenzyme A carboxylase (ACC) complex. First, biotin carboxylase catalyzes the carboxylation of biotin on its carrier protein (BCCP) and then the CO(2) group is transferred by the carboxyltransferase to acetyl-CoA to form malonyl-CoA. The sequence is that of Acetyl-coenzyme A carboxylase carboxyl transferase subunit alpha, chloroplastic (ACCA) from Pisum sativum (Garden pea).